Consider the following 154-residue polypeptide: Endoribonuclease YbeY (154 aa).

Zn(2+) contacts are provided by His-117, His-121, and His-127.

The protein belongs to the endoribonuclease YbeY family. Zn(2+) serves as cofactor.

The protein localises to the cytoplasm. In terms of biological role, single strand-specific metallo-endoribonuclease involved in late-stage 70S ribosome quality control and in maturation of the 3' terminus of the 16S rRNA. The protein is Endoribonuclease YbeY of Polaromonas sp. (strain JS666 / ATCC BAA-500).